The sequence spans 255 residues: Acetylglutamate kinase (255 aa).

Substrate contacts are provided by residues 40-41 (GG), Arg62, and Asn153.

The protein belongs to the acetylglutamate kinase family. ArgB subfamily.

The protein localises to the cytoplasm. It carries out the reaction N-acetyl-L-glutamate + ATP = N-acetyl-L-glutamyl 5-phosphate + ADP. It functions in the pathway amino-acid biosynthesis; L-arginine biosynthesis; N(2)-acetyl-L-ornithine from L-glutamate: step 2/4. Its function is as follows. Catalyzes the ATP-dependent phosphorylation of N-acetyl-L-glutamate. This Bacillus mycoides (strain KBAB4) (Bacillus weihenstephanensis) protein is Acetylglutamate kinase.